The primary structure comprises 159 residues: 2-C-methyl-D-erythritol 2,4-cyclodiphosphate synthase (159 aa).

Residues Asp8 and His10 each contribute to the a divalent metal cation site. 4-CDP-2-C-methyl-D-erythritol 2-phosphate is bound by residues 8-10 (DVH) and 34-35 (HS). His42 contributes to the a divalent metal cation binding site. 4-CDP-2-C-methyl-D-erythritol 2-phosphate contacts are provided by residues 56-58 (DIG), 61-65 (FPDTD), 100-106 (AQAPKML), 132-135 (TTTE), Phe139, and Arg142.

Belongs to the IspF family. Homotrimer. The cofactor is a divalent metal cation.

It carries out the reaction 4-CDP-2-C-methyl-D-erythritol 2-phosphate = 2-C-methyl-D-erythritol 2,4-cyclic diphosphate + CMP. Its pathway is isoprenoid biosynthesis; isopentenyl diphosphate biosynthesis via DXP pathway; isopentenyl diphosphate from 1-deoxy-D-xylulose 5-phosphate: step 4/6. In terms of biological role, involved in the biosynthesis of isopentenyl diphosphate (IPP) and dimethylallyl diphosphate (DMAPP), two major building blocks of isoprenoid compounds. Catalyzes the conversion of 4-diphosphocytidyl-2-C-methyl-D-erythritol 2-phosphate (CDP-ME2P) to 2-C-methyl-D-erythritol 2,4-cyclodiphosphate (ME-CPP) with a corresponding release of cytidine 5-monophosphate (CMP). This is 2-C-methyl-D-erythritol 2,4-cyclodiphosphate synthase from Escherichia coli O127:H6 (strain E2348/69 / EPEC).